A 306-amino-acid polypeptide reads, in one-letter code: MVSRRKAPRSGQSEQWVLLAPESLSGDAKNLSDETVFVKLRAPFADKGAMFLFINSGQQICEVKAFHEEYRSWFIGQTVQQDGRLLIATPIDPLFLVLPYLIKADKEQGKFQPVEQIVVDEEFPSCGMLLQCTPVAKSLHHVTEEKEIGSKKFHKYSKEKALVWLKKKVDQTVKVLKSSKVCVGGGVQSATFIRSTQGSDVKEEDYTRYAHGLISEYLTEDLREDLSKYLGLPDLSSPTPEPPVKKRRVSDAPVEADEDYTKYNSDNKSRKSNSKMTAAQKSLAKVDKSGMKNISAFFSPKAKAAK.

A disordered region spans residues leucine 232 to lysine 285. Residues aspartate 259–serine 269 are compositionally biased toward basic and acidic residues.

It belongs to the RNase H2 subunit B family. As to quaternary structure, the RNase H2 complex is a heterotrimer composed of the catalytic subunit RNASEH2A and the non-catalytic subunits RNASEH2B and RNASEH2C.

The protein localises to the nucleus. Functionally, non catalytic subunit of RNase H2, an endonuclease that specifically degrades the RNA of RNA:DNA hybrids. Participates in DNA replication, possibly by mediating the removal of lagging-strand Okazaki fragment RNA primers during DNA replication. Mediates the excision of single ribonucleotides from DNA:RNA duplexes. The polypeptide is Ribonuclease H2 subunit B (rnaseh2b) (Xenopus laevis (African clawed frog)).